Reading from the N-terminus, the 418-residue chain is Thyroxine-binding globulin (418 aa).

The signal sequence occupies residues 1 to 20; sequence MSVFFYLFVLVFGLQATIHC. Asn-24, Asn-39, Asn-102, Asn-168, Asn-227, and Asn-256 each carry an N-linked (GlcNAc...) asparagine glycan. 2 residues coordinate thyroxine: Asn-296 and Lys-401.

Belongs to the serpin family.

The protein resides in the secreted. Its function is as follows. Major thyroid hormone transport protein in serum. This chain is Thyroxine-binding globulin (Serpina7), found in Mus musculus (Mouse).